A 219-amino-acid chain; its full sequence is uncharacterized protein (219 aa).

Low complexity predominate over residues 1-17; it reads MIINNQNSPQSINTPSS. The tract at residues 1–31 is disordered; it reads MIINNQNSPQSINTPSSVSSRQHINKSKKKK. Helical transmembrane passes span 49-69 and 83-105; these read SLATVFGVIGGLVLGIVLVCK and LVYRIVGIFLSAGTGGNLSSYIG. The disordered stretch occupies residues 135-219; that stretch reads NHRSPIPLTN…NSDLEIPIPI (85 aa). Residues 144 to 212 are compositionally biased toward low complexity; the sequence is NLNNNNNNNN…SNNNNDNNSD (69 aa).

It localises to the membrane. This is an uncharacterized protein from Dictyostelium discoideum (Social amoeba).